The following is a 248-amino-acid chain: 2-C-methyl-D-erythritol 4-phosphate cytidylyltransferase (248 aa).

It belongs to the IspD/TarI cytidylyltransferase family. IspD subfamily.

The enzyme catalyses 2-C-methyl-D-erythritol 4-phosphate + CTP + H(+) = 4-CDP-2-C-methyl-D-erythritol + diphosphate. It participates in isoprenoid biosynthesis; isopentenyl diphosphate biosynthesis via DXP pathway; isopentenyl diphosphate from 1-deoxy-D-xylulose 5-phosphate: step 2/6. Functionally, catalyzes the formation of 4-diphosphocytidyl-2-C-methyl-D-erythritol from CTP and 2-C-methyl-D-erythritol 4-phosphate (MEP). The polypeptide is 2-C-methyl-D-erythritol 4-phosphate cytidylyltransferase (Corynebacterium efficiens (strain DSM 44549 / YS-314 / AJ 12310 / JCM 11189 / NBRC 100395)).